A 368-amino-acid chain; its full sequence is Histidinol-phosphate aminotransferase (368 aa).

The residue at position 215 (K215) is an N6-(pyridoxal phosphate)lysine.

Belongs to the class-II pyridoxal-phosphate-dependent aminotransferase family. Histidinol-phosphate aminotransferase subfamily. In terms of assembly, homodimer. Pyridoxal 5'-phosphate is required as a cofactor.

It carries out the reaction L-histidinol phosphate + 2-oxoglutarate = 3-(imidazol-4-yl)-2-oxopropyl phosphate + L-glutamate. The protein operates within amino-acid biosynthesis; L-histidine biosynthesis; L-histidine from 5-phospho-alpha-D-ribose 1-diphosphate: step 7/9. This chain is Histidinol-phosphate aminotransferase, found in Buchnera aphidicola subsp. Acyrthosiphon pisum (strain 5A).